The following is a 369-amino-acid chain: Histidinol-phosphate aminotransferase (369 aa).

Position 222 is an N6-(pyridoxal phosphate)lysine (lysine 222).

The protein belongs to the class-II pyridoxal-phosphate-dependent aminotransferase family. Histidinol-phosphate aminotransferase subfamily. In terms of assembly, homodimer. Pyridoxal 5'-phosphate is required as a cofactor.

It carries out the reaction L-histidinol phosphate + 2-oxoglutarate = 3-(imidazol-4-yl)-2-oxopropyl phosphate + L-glutamate. It functions in the pathway amino-acid biosynthesis; L-histidine biosynthesis; L-histidine from 5-phospho-alpha-D-ribose 1-diphosphate: step 7/9. This Halalkalibacterium halodurans (strain ATCC BAA-125 / DSM 18197 / FERM 7344 / JCM 9153 / C-125) (Bacillus halodurans) protein is Histidinol-phosphate aminotransferase.